We begin with the raw amino-acid sequence, 274 residues long: 2,3,4,5-tetrahydropyridine-2,6-dicarboxylate N-succinyltransferase (274 aa).

Substrate contacts are provided by R104 and D141.

Belongs to the transferase hexapeptide repeat family. As to quaternary structure, homotrimer.

The protein resides in the cytoplasm. The catalysed reaction is (S)-2,3,4,5-tetrahydrodipicolinate + succinyl-CoA + H2O = (S)-2-succinylamino-6-oxoheptanedioate + CoA. Its pathway is amino-acid biosynthesis; L-lysine biosynthesis via DAP pathway; LL-2,6-diaminopimelate from (S)-tetrahydrodipicolinate (succinylase route): step 1/3. The polypeptide is 2,3,4,5-tetrahydropyridine-2,6-dicarboxylate N-succinyltransferase (Yersinia enterocolitica serotype O:8 / biotype 1B (strain NCTC 13174 / 8081)).